Here is a 497-residue protein sequence, read N- to C-terminus: Cysteine--tRNA ligase (497 aa).

Cys-46 is a binding site for Zn(2+). The 'HIGH' region motif lies at 48–58; it reads PTVYSDAHLGH. Positions 237, 262, and 266 each coordinate Zn(2+). Positions 293–297 match the 'KMSKS' region motif; sequence KMSKS. Lys-296 is a binding site for ATP.

The protein belongs to the class-I aminoacyl-tRNA synthetase family. Monomer. Requires Zn(2+) as cofactor.

The protein resides in the cytoplasm. It carries out the reaction tRNA(Cys) + L-cysteine + ATP = L-cysteinyl-tRNA(Cys) + AMP + diphosphate. This chain is Cysteine--tRNA ligase, found in Deinococcus geothermalis (strain DSM 11300 / CIP 105573 / AG-3a).